Consider the following 490-residue polypeptide: Transcription factor lin-26 (490 aa).

Disordered regions lie at residues 96-176 (KYKD…PLHQ), 236-262 (TPEY…EPDS), and 302-326 (ASKP…KKHR). The segment at 101–110 (SSSPESPSTT) is PEST. Positions 101-120 (SSSPESPSTTASTAAQHTPP) are enriched in low complexity. Composition is skewed to polar residues over residues 123 to 132 (AVSTPTSINT) and 151 to 176 (NLST…PLHQ). Positions 236-260 (TPEYDDNHHSETISKASSEDLKTEP) are enriched in basic and acidic residues. Residues 353-381 (YKCALCGKPTTLNSTGSRWNLLRHVIMIH) form a C2H2-type; degenerate zinc finger.

In terms of tissue distribution, expressed in somatic gonads and germline precursors until the 50-cell stage. After the 100-cell stage, expression is seen in differentiating hypodermal and support cells (at protein level).

The protein resides in the nucleus. Its function is as follows. Probable transcription factor. Required to specify the fates of hypodermal and neuron-associated support cells. Functions during vulval development, playing a role in vulval precursor cell fate specification. Positively modulates expression of homeobox protein lin-39, perhaps by binding to regulatory regions of the lin-39 gene, acting in the vulval lineage. The chain is Transcription factor lin-26 from Caenorhabditis elegans.